The chain runs to 335 residues: tRNA-splicing endonuclease (335 aa).

Catalysis depends on residues Tyr269, His280, and Lys311.

Belongs to the tRNA-intron endonuclease family. Archaeal long subfamily. Homodimer.

It carries out the reaction pretRNA = a 3'-half-tRNA molecule with a 5'-OH end + a 5'-half-tRNA molecule with a 2',3'-cyclic phosphate end + an intron with a 2',3'-cyclic phosphate and a 5'-hydroxyl terminus.. In terms of biological role, endonuclease that removes tRNA introns. Cleaves pre-tRNA at the 5'- and 3'-splice sites to release the intron. The products are an intron and two tRNA half-molecules bearing 2',3' cyclic phosphate and 5'-OH termini. Recognizes a pseudosymmetric substrate in which 2 bulged loops of 3 bases are separated by a stem of 4 bp. The protein is tRNA-splicing endonuclease of Haloarcula marismortui (strain ATCC 43049 / DSM 3752 / JCM 8966 / VKM B-1809) (Halobacterium marismortui).